Here is a 382-residue protein sequence, read N- to C-terminus: Solvent efflux pump periplasmic linker SrpA (382 aa).

The signal sequence occupies residues 1–23 (MRQIRSPRALRVIPLTALMLISG). The N-palmitoyl cysteine moiety is linked to residue Cys24. Cys24 carries S-diacylglycerol cysteine lipidation. Residues 98 to 127 (RTYEAQLRRAEANRTSAQNLARRYETLLKT) are a coiled coil.

The protein belongs to the membrane fusion protein (MFP) (TC 8.A.1) family.

The protein resides in the cell inner membrane. In terms of biological role, the periplasmic linker protein component of an organic solvent efflux pump. Involved in export of a number of low log POW compounds including hexane (log POW 3.5), toluene (log POW 2.5) and dimethylphthalate (log POW 2.3). The solvent resistance phenotype has been postulated to depend on the operon expression level. The polypeptide is Solvent efflux pump periplasmic linker SrpA (srpA) (Pseudomonas putida (Arthrobacter siderocapsulatus)).